The primary structure comprises 396 residues: NADH-quinone oxidoreductase subunit D (396 aa).

The protein belongs to the complex I 49 kDa subunit family. In terms of assembly, NDH-1 is composed of 14 different subunits. Subunits NuoB, C, D, E, F, and G constitute the peripheral sector of the complex.

It localises to the cell inner membrane. It catalyses the reaction a quinone + NADH + 5 H(+)(in) = a quinol + NAD(+) + 4 H(+)(out). Functionally, NDH-1 shuttles electrons from NADH, via FMN and iron-sulfur (Fe-S) centers, to quinones in the respiratory chain. The immediate electron acceptor for the enzyme in this species is believed to be ubiquinone. Couples the redox reaction to proton translocation (for every two electrons transferred, four hydrogen ions are translocated across the cytoplasmic membrane), and thus conserves the redox energy in a proton gradient. The sequence is that of NADH-quinone oxidoreductase subunit D from Rhodopseudomonas palustris (strain BisB18).